The following is a 201-amino-acid chain: MMTLKVAIGPQNAFVLRQGIRREYVLVIVALCGIADGALIAAGVGGFAALIHAHPNMTLVARFGGAAFLIGYALLAARNAWRPSGLVPSESGPAALIGVVQMCLVVTFLNPHVYLDTVVLIGALANEESDLRWFFGAGAWAASVVWFAVLGFSAGRLQPFFATPAAWRILDALVAVTMIGVAVVVLVTSPSVPTANVALII.

The next 5 helical transmembrane spans lie at 25–45 (VLVI…AGVG), 57–77 (MTLV…LLAA), 104–124 (LVVT…IGAL), 133–153 (WFFG…LGFS), and 169–189 (ILDA…LVTS).

Belongs to the LysE/ArgO transporter (TC 2.A.75) family.

Its subcellular location is the cell membrane. The polypeptide is Putative amino-acid transporter Mb0498 (Mycobacterium bovis (strain ATCC BAA-935 / AF2122/97)).